The sequence spans 242 residues: Synaptonemal complex central element protein 1-like (242 aa).

Residues 1–24 (MAGKLKPLNVEAPEATEEAEGQAK) are disordered. A coiled-coil region spans residues 44-181 (LEPQIEDLIS…LREVERRLHS (138 aa)). The segment at 206 to 242 (VRSAPEVGAGEGEAGPELPRARDEEDPEPPVAAPDAL) is disordered.

It belongs to the SYCE family.

Its function is as follows. May be involved in meiosis. The polypeptide is Synaptonemal complex central element protein 1-like (SYCE1L) (Homo sapiens (Human)).